Here is a 442-residue protein sequence, read N- to C-terminus: Small RNA 2'-O-methyltransferase (442 aa).

S-adenosyl-L-methionine is bound by residues glycine 125 and aspartate 151. Residues glutamate 209, glutamate 212, histidine 213, and histidine 260 each coordinate Mg(2+).

This sequence belongs to the methyltransferase superfamily. HEN1 family. Requires Mg(2+) as cofactor. As to expression, broadly expressed in the germline and somatic tissues in both hermaphrodites and males.

The protein localises to the cytoplasm. It is found in the nucleus. The protein resides in the nucleoplasm. It localises to the cytoplasmic granule. It carries out the reaction small RNA 3'-end nucleotide + S-adenosyl-L-methionine = small RNA 3'-end 2'-O-methylnucleotide + S-adenosyl-L-homocysteine + H(+). Functionally, methyltransferase that adds a 2'-O-methyl group at the 3'-end of PIWI-interacting RNAs (piRNAs) and small interfering RNAs (siRNAs) which are classes of regulatory RNAs that are involved in gene silencing in endogenous RNA interference (RNAi) pathways. Methylation protects the 3'-end of small RNAs from tailing and trimming and could constitute a recognition signal for appropriate argonaute machineries. Methylates and stabilizes 26G-siRNAs (a class of 26 nucleotide siRNAs that possess a monophosphorylated guanine residue at the 5'-end) when they are bound by argonaute protein ergo-1. This occurs in the female germline and embryo, but not in the male germline. Does not methylate 26G-siRNAs bound by argonaute proteins alg-3 or alg-4. Methylates and stabilizes 21U-piRNAs, which are a class of 21 nucleotide piRNAs that possess a uracil residue at the 5'-end, in the male and female germline. In addition, may play a role in exogenous RNAi (exoRNAi) pathways in the germline. The polypeptide is Small RNA 2'-O-methyltransferase (Caenorhabditis elegans).